Consider the following 354-residue polypeptide: Anthranilate phosphoribosyltransferase (354 aa).

5-phospho-alpha-D-ribose 1-diphosphate-binding positions include Gly94, 97–98 (GD), Thr102, 104–107 (NIST), 122–130 (KHGNRAASS), and Ser134. Gly94 contributes to the anthranilate binding site. Mg(2+) is bound at residue Ser106. Asn125 serves as a coordination point for anthranilate. Residue Arg180 coordinates anthranilate. Residues Asp238 and Glu239 each contribute to the Mg(2+) site.

It belongs to the anthranilate phosphoribosyltransferase family. As to quaternary structure, homodimer. Requires Mg(2+) as cofactor.

It carries out the reaction N-(5-phospho-beta-D-ribosyl)anthranilate + diphosphate = 5-phospho-alpha-D-ribose 1-diphosphate + anthranilate. It participates in amino-acid biosynthesis; L-tryptophan biosynthesis; L-tryptophan from chorismate: step 2/5. Functionally, catalyzes the transfer of the phosphoribosyl group of 5-phosphorylribose-1-pyrophosphate (PRPP) to anthranilate to yield N-(5'-phosphoribosyl)-anthranilate (PRA). The sequence is that of Anthranilate phosphoribosyltransferase from Streptomyces griseus subsp. griseus (strain JCM 4626 / CBS 651.72 / NBRC 13350 / KCC S-0626 / ISP 5235).